The primary structure comprises 249 residues: Aspartate/glutamate leucyltransferase (249 aa).

It belongs to the R-transferase family. Bpt subfamily.

The protein resides in the cytoplasm. The catalysed reaction is N-terminal L-glutamyl-[protein] + L-leucyl-tRNA(Leu) = N-terminal L-leucyl-L-glutamyl-[protein] + tRNA(Leu) + H(+). It catalyses the reaction N-terminal L-aspartyl-[protein] + L-leucyl-tRNA(Leu) = N-terminal L-leucyl-L-aspartyl-[protein] + tRNA(Leu) + H(+). In terms of biological role, functions in the N-end rule pathway of protein degradation where it conjugates Leu from its aminoacyl-tRNA to the N-termini of proteins containing an N-terminal aspartate or glutamate. The protein is Aspartate/glutamate leucyltransferase of Brucella anthropi (strain ATCC 49188 / DSM 6882 / CCUG 24695 / JCM 21032 / LMG 3331 / NBRC 15819 / NCTC 12168 / Alc 37) (Ochrobactrum anthropi).